Consider the following 147-residue polypeptide: MSSEPPPPPQPPTHQTSIGLLDTPRARDRSPSPLRGNVVPSPLPTRRTRTFSATVRASQGPVYKGVCKCFCRSKGHGFITPADGGPDIFLHISDVEGEYVPVEGDEVTYKMCSIPPKNEKLQAVEVVITHLAPGTKHETWSGHVISS.

The span at 1-12 (MSSEPPPPPQPP) shows a compositional bias: pro residues. The tract at residues 1-49 (MSSEPPPPPQPPTHQTSIGLLDTPRARDRSPSPLRGNVVPSPLPTRRTR) is disordered. Residue S2 is modified to N-acetylserine. A phosphoserine mark is found at S30, S32, and S41. T45 carries the post-translational modification Phosphothreonine. A phosphoserine mark is found at S52 and S58. The 68-residue stretch at 62–129 (VYKGVCKCFC…KLQAVEVVIT (68 aa)) folds into the CSD domain. Residues S146 and S147 each carry the phosphoserine modification.

In terms of assembly, homodimer. Interacts with STYX. Post-translationally, can be phosphorylated by DYRK2 (in vitro). Dephosphorylated by calcineurin in a Ca(2+) dependent manner, and probably by PP2A or PP4 serine phosphatases in cAMP- and PKC-mediated pathways. As to expression, widely expressed.

It is found in the cytoplasm. Its subcellular location is the P-body. The protein localises to the cytoplasmic granule. Binds mRNA and regulates the stability of target mRNA. The chain is Calcium-regulated heat stable protein 1 (Carhsp1) from Rattus norvegicus (Rat).